A 250-amino-acid chain; its full sequence is rRNA methyltransferase 2, mitochondrial (250 aa).

Residues 1–35 (MRLVFTGNCVFKRLLHTEIGGKYAKQQPRNLKGRS) constitute a mitochondrion transit peptide. S-adenosyl-L-methionine-binding positions include 90–93 (PGSW), aspartate 119, 136–137 (DF), and aspartate 161. The active-site Proton acceptor is lysine 201.

It belongs to the class I-like SAM-binding methyltransferase superfamily. RNA methyltransferase RlmE family.

It localises to the mitochondrion. It carries out the reaction a uridine in rRNA + S-adenosyl-L-methionine = a 2'-O-methyluridine in rRNA + S-adenosyl-L-homocysteine + H(+). In terms of biological role, S-adenosyl-L-methionine-dependent 2'-O-ribose methyltransferase that catalyzes the formation of 2'-O-methyluridine at position 1579 (Um1579) in the mitochondrial large subunit ribosomal RNA (mtLSU rRNA), a universally conserved modification in the peptidyl transferase domain of the mtLSU rRNA. This activity may require prior 2'-O-methylguanosine modification at position 1580 (Gm1580) by MRM3. Essential for late-stage assembly of mtLSU required for efficient translation of mitochondrial DNA encoded proteins; methyltransferase activity is not required for this function. Essential for mitochondrial respiratory function. The sequence is that of rRNA methyltransferase 2, mitochondrial from Drosophila melanogaster (Fruit fly).